Here is a 492-residue protein sequence, read N- to C-terminus: Zn(2)-C6 fungal-type transcription factor (492 aa).

Residues 14–41 constitute a DNA-binding region (zn(2)-C6 fungal-type); it reads CRRCKNRKIKCDEVHPRCGNCAKHGVPC. Positions 58-119 are disordered; it reads TSTESVGAPT…QPSISSSTNT (62 aa). Positions 78–95 are enriched in low complexity; that stretch reads SAPRTPLTRPRAPSSPAR. The residue at position 82 (threonine 82) is a Phosphothreonine. Phosphoserine occurs at positions 92 and 102. A compositionally biased stretch (polar residues) spans 107–119; it reads VYSQPSISSSTNT. A Phosphothreonine modification is found at threonine 217. At serine 305 the chain carries Phosphoserine.

As to quaternary structure, interacts with HOG1. In terms of processing, phosphorylation at Thr-82, Ser-92, Ser-102, thr-117 and ser-305 by HOG1 is required for regulating expression of ergosterol biosynthesis genes.

It localises to the nucleus. Functionally, transcription factor that targets gene promoters containing 2 conserved CGAA repeat sequences. Positively regulates the expression of ergosterol biosynthesis genes including CYP51A and CYP51B encoding the sterol 14-alpha demethylase, and ERG6A and ERG6B encoding the sterol 24-C-methyltransferase. The chain is Zn(2)-C6 fungal-type transcription factor from Gibberella zeae (strain ATCC MYA-4620 / CBS 123657 / FGSC 9075 / NRRL 31084 / PH-1) (Wheat head blight fungus).